We begin with the raw amino-acid sequence, 154 residues long: Histone H2B.5 (154 aa).

Over residues 1–25 the composition is skewed to basic and acidic residues; sequence MAPKAEKKPAAKKVAEEEPSEKAAP. The disordered stretch occupies residues 1-62; sequence MAPKAEKKPA…DKKGRKKAKK (62 aa). 2 positions are modified to N6-acetyllysine: Lys-7 and Lys-39. A Glycyl lysine isopeptide (Lys-Gly) (interchain with G-Cter in ubiquitin) cross-link involves residue Lys-150.

The protein belongs to the histone H2B family. In terms of assembly, the nucleosome is a histone octamer containing two molecules each of H2A, H2B, H3 and H4 assembled in one H3-H4 heterotetramer and two H2A-H2B heterodimers. The octamer wraps approximately 147 bp of DNA. In terms of processing, can be acetylated to form H2BK6ac and H2BK33ac. Monoubiquitinated to form H2BK143ub1; may give a specific tag for epigenetic transcriptional activation.

It localises to the nucleus. It is found in the chromosome. Functionally, core component of nucleosome. Nucleosomes wrap and compact DNA into chromatin, limiting DNA accessibility to the cellular machineries which require DNA as a template. Histones thereby play a central role in transcription regulation, DNA repair, DNA replication and chromosomal stability. DNA accessibility is regulated via a complex set of post-translational modifications of histones, also called histone code, and nucleosome remodeling. The protein is Histone H2B.5 of Zea mays (Maize).